The chain runs to 190 residues: Elongation factor P (190 aa).

It belongs to the elongation factor P family.

It localises to the cytoplasm. Its pathway is protein biosynthesis; polypeptide chain elongation. In terms of biological role, involved in peptide bond synthesis. Stimulates efficient translation and peptide-bond synthesis on native or reconstituted 70S ribosomes in vitro. Probably functions indirectly by altering the affinity of the ribosome for aminoacyl-tRNA, thus increasing their reactivity as acceptors for peptidyl transferase. This is Elongation factor P from Pseudomonas fluorescens (strain ATCC BAA-477 / NRRL B-23932 / Pf-5).